The sequence spans 720 residues: Polyribonucleotide nucleotidyltransferase (720 aa).

2 residues coordinate Mg(2+): Asp-487 and Asp-493. The region spanning 554-613 (PRIETFKIPTDKIREVIGTGGKVIREIVEKTGAKINIEDDGTVKVASNDGEAMKAAIKWI) is the KH domain. An S1 motif domain is found at 623–691 (GQIYEGTVVK…DRGKTRLSMK (69 aa)). The disordered stretch occupies residues 691-720 (KAVDQQTGEDLEAAGHKAEKADAPREAAGE). The segment covering 703 to 720 (AAGHKAEKADAPREAAGE) has biased composition (basic and acidic residues).

The protein belongs to the polyribonucleotide nucleotidyltransferase family. The cofactor is Mg(2+).

It is found in the cytoplasm. It catalyses the reaction RNA(n+1) + phosphate = RNA(n) + a ribonucleoside 5'-diphosphate. Involved in mRNA degradation. Catalyzes the phosphorolysis of single-stranded polyribonucleotides processively in the 3'- to 5'-direction. This Nitrobacter hamburgensis (strain DSM 10229 / NCIMB 13809 / X14) protein is Polyribonucleotide nucleotidyltransferase.